The chain runs to 364 residues: Uroporphyrinogen decarboxylase (364 aa).

Substrate-binding positions include 49–53, Asp-98, Tyr-173, Ser-228, and His-341; that span reads RQAGR.

This sequence belongs to the uroporphyrinogen decarboxylase family. In terms of assembly, homodimer.

The protein localises to the cytoplasm. It catalyses the reaction uroporphyrinogen III + 4 H(+) = coproporphyrinogen III + 4 CO2. The protein operates within porphyrin-containing compound metabolism; protoporphyrin-IX biosynthesis; coproporphyrinogen-III from 5-aminolevulinate: step 4/4. Catalyzes the decarboxylation of four acetate groups of uroporphyrinogen-III to yield coproporphyrinogen-III. The sequence is that of Uroporphyrinogen decarboxylase from Protochlamydia amoebophila (strain UWE25).